The chain runs to 1043 residues: BAG family molecular chaperone regulator 6 (1043 aa).

Disordered stretches follow at residues Lys253–Val294, Asp311–Ile331, Val343–His366, Asn410–Arg500, and Ser533–Phe566. Basic and acidic residues-rich tracts occupy residues Asp311–Pro324, Val343–Asn357, Ser416–Gln443, and Lys478–Lys487. A compositionally biased stretch (polar residues) spans Val534–Glu543. Residues Lys550–Phe566 are compositionally biased toward basic and acidic residues. Positions Glu568–Ala597 constitute an IQ domain. Positions Glu595–Lys672 constitute a BAG domain. The segment covering Ser724–Ala741 has biased composition (basic and acidic residues). 4 disordered regions span residues Ser724–Glu749, Ala764–Met799, Glu817–Glu975, and Glu1015–Leu1043. Low complexity predominate over residues Ala840 to Glu852. The span at Asn853 to Glu871 shows a compositional bias: basic and acidic residues. 2 stretches are compositionally biased toward polar residues: residues Gln885–Gly899 and Ser919–Glu932. Positions Gln934–Pro951 are enriched in basic and acidic residues. The stretch at Gly971 to Thr1024 forms a coiled coil. The segment covering Leu1018–Ser1031 has biased composition (basic residues). Residues Met1034–Leu1043 are compositionally biased toward polar residues.

In terms of assembly, binds to the ATPase domain of HSP70/HSC70 chaperones. Interacts with calmodulins CAM1, CAM2, CAM3, CAM4, CAM6 and CAM7. Interacts with BAGP1 and APCB1. In terms of tissue distribution, detected in stems, leaves, flowers and roots.

Functionally, co-chaperone that regulates diverse cellular pathways, such as programmed cell death and stress responses. Involved in plant basal resistance. Involved in basal heat response through the regulation of the heat induced small HSP (sHSP) transcriptional cascade. In terms of biological role, induces autophagy. In Arabidopsis thaliana (Mouse-ear cress), this protein is BAG family molecular chaperone regulator 6.